The primary structure comprises 314 residues: Transmembrane protein 248 (314 aa).

A helical transmembrane segment spans residues Val21–Phe41. The segment at Leu78–Asp106 is disordered. Polar residues predominate over residues Asn80–Gln102. The next 3 membrane-spanning stretches (helical) occupy residues Gln179–Val199, Phe236–Val258, and Leu270–Ile290.

It belongs to the TMEM248 family.

The protein resides in the membrane. The chain is Transmembrane protein 248 (TMEM248) from Homo sapiens (Human).